The chain runs to 536 residues: Uridine 5'-monophosphate transferase (536 aa).

Residues 22 to 84 (ADHPTHTPED…GLQQCSSSPS (63 aa)) are disordered. Polar residues predominate over residues 31-45 (DSPQTVPSPRSSSAH). Over residues 48–60 (EIQELRSLQETRP) the composition is skewed to basic and acidic residues. Over residues 66–84 (RSQSRSSKHGLQQCSSSPS) the composition is skewed to polar residues. 6 LRR repeats span residues 140-164 (AGQA…LHRL), 165-189 (AHLR…SLCK), 191-211 (LERI…IGAL), 212-234 (KNLS…IGQC), 236-257 (SLTT…LANL), and 258-282 (TQLK…NLDD). The 157-residue stretch at 377-533 (ITLDRIFKLN…LEGIATVMNQ (157 aa)) folds into the Fido domain.

The protein in the C-terminal section; belongs to the fic family. As to quaternary structure, interacts with several members of the Arabidopsis RLCK VIIa subfamily.

The protein resides in the secreted. Its subcellular location is the host cell. It is found in the host cell membrane. It catalyses the reaction L-seryl-[protein] + UTP = O-(5'-uridylyl)-L-seryl-[protein] + diphosphate. The enzyme catalyses L-threonyl-[protein] + UTP = uridylyl-L-threonyl-[protein] + diphosphate. Functions both as a virulence and an avirulence gene in Arabidopsis. Causes disease on the Kashmir (Kas) ecotype, but not on Columbia (Col-0) ecotype. Acts by directly uridylylating the conserved phosphorylation sites in the activation loop of a number of host receptor-like cytoplasmic protein kinases (RLCK), including BIK1, RIPK, PBL1 and PBL2, preventing the activation of these kinases and subsequent signal transduction. In susceptible Arabidopsis plants, uridylylation of BIK1 inhibits the PAMP-triggered immunity (PTI) signaling cascade and thereby promotes bacterial virulence. It also inhibits RPM1-dependent effector-triggered immunity (ETI) in mesophyll tissues by targeting RIPK. In contrast, in the resistant ecotype Col-0, xopAC is a major avirulence gene. Uridylylation of PBL2 triggers the PBL2-RKS1 interaction and thus the assembly of the PBL2-RKS1-ZAR1 complex, which, in turn, activates effector-triggered immunity (ETI) against X.campestris. The protein is Uridine 5'-monophosphate transferase of Xanthomonas campestris pv. campestris (strain 8004).